The following is an 863-amino-acid chain: MSSPTSTPSRRRNKRGRGSNPPTPHGEEVQSPPSQRRRTEDSTSIGELLPMPTSPSGDLQSPSGQELMFSSPAPSRHSALQSELDLSSPLTYGTPSSRVEGTPRSGIRGTPARQRPDLGSARKVKQVDLHSDQPAAEELVTSEQSLGQKLVIWGTDVNVATCKEKFQRFVQRFIDPLAKEEENVGLDLNEPIYMQRLEEINVVGEPFLNVDCDHLRSFDQDLYRQLVCYPQEVIPTFDMAANEIFFERYPDSILEHQIQVRPYNALKTRNMRSLNPEDIDQLITISGMVIRTSQIIPEMQEAFFKCQVCAFTTRVEIDRGRISEPSVCKHCNTTHSMALIHNRSMFSDKQMIKLQESPEDMPAGQTPHTTILYGHNDLVDKVQPGDRVNVTGIYRAVPIRVNPRVRNVKSVYKTHIDVIHYRKTDAKRLHGIDEDTEQKMFTEERVAMLKELAAKPDIYERLASALAPSIYEHEDIKKGILLQLFGGTRKDFSHTGRGKFRAEVNILLCGDPGTSKSQLLQYVYNLVPRGQYTSGKGSSAVGLTAYVMKDPETRQLVLQTGALVLSDNGICCIDEFDKMNESTRSVLHEVMEQQTLSIAKAGIICQLNARTSVLAAANPVESQWNPKKTTIENIQLPHTLLSRFDLIFLMLDPQDETYDRRLAHHLVALYYQSEEQMKEEHLDMAVLKDYIAYARTYVNPRLGEEASQALIEAYVDMRKIGSGRGMVSAYPRQLESLIRLSEAHAKVRFSSKVETIDVEEAKRLHREALKQSATDPRTGIVDISILTTGMSATARKRKEELAQVLKKLIQSKGKTPALKYQQLFEDLRGQSDAAVTKDMFDEALHALADEDYLTVTGKTVRLL.

The disordered stretch occupies residues 1-121; that stretch reads MSSPTSTPSR…ARQRPDLGSA (121 aa). 2 stretches are compositionally biased toward polar residues: residues 54 to 64 and 78 to 99; these read SPSGDLQSPSG and SALQ…SSRV. The C4-type zinc-finger motif lies at 306–331; that stretch reads CQVCAFTTRVEIDRGRISEPSVCKHC. One can recognise an MCM domain in the interval 458–667; sequence IYERLASALA…YDRRLAHHLV (210 aa). ATP is bound by residues Tyr-471, Arg-497, Lys-516, Ser-517, Asn-618, Arg-643, Arg-732, and Glu-735. The Arginine finger motif lies at 642-645; sequence SRFD.

This sequence belongs to the MCM family. As to quaternary structure, component of the mcm2-7 complex (RLF-M). The complex forms a toroidal hexameric ring with the proposed subunit order mcm2-mcm6-mcm4-mcm7-mcm3-mcm5. The heterodimer of mmcm3/mcm5 interacts with mcm4, mmcm6, mcm7 and weakly with mcm2. Component of the CMG helicase complex, composed of the mcm2-7 complex, the GINS complex and cdc45. Post-translationally, hyperphosphorylated during mitosis in a mechanism requiring cdc2-cyclin B and other kinases. Undergoes dephosphorylation after exiting mitosis, existing in a partially phosphorylated state in the cytosolic interphase mcm complex which associates with the pre-replication complexes (pre-Rcs). Complete dephosphorylation inactivates the mcm complex, preventing its binding to chromatin. Becomes actively phosphorylated during S phase once the mcm complex is assembled on the chromatin. This chromatin-associated phosphorylation occurs during the activation of the pre-Rcs and is independent of cdks. Phosphorylated by the cdc7-dbf4b complex.

It localises to the nucleus. Its subcellular location is the chromosome. It catalyses the reaction ATP + H2O = ADP + phosphate + H(+). Acts as a component of the MCM2-7 complex (MCM complex) which is the replicative helicase essential for 'once per cell cycle' DNA replication initiation and elongation in eukaryotic cells. Core component of CDC45-MCM-GINS (CMG) helicase, the molecular machine that unwinds template DNA during replication, and around which the replisome is built. The active ATPase sites in the MCM2-7 ring are formed through the interaction surfaces of two neighboring subunits such that a critical structure of a conserved arginine finger motif is provided in trans relative to the ATP-binding site of the Walker A box of the adjacent subunit. The six ATPase active sites, however, are likely to contribute differentially to the complex helicase activity. This Xenopus tropicalis (Western clawed frog) protein is DNA replication licensing factor mcm4.